The sequence spans 201 residues: Twist-related protein 1 (201 aa).

Residues 1–18 (MMQDVSSSPVSPADDSLS) show a composition bias toward low complexity. A disordered region spans residues 1–106 (MMQDVSSSPV…GGGSPQSYEE (106 aa)). Residues 34-43 (RGGRKRRSSR) are compositionally biased toward basic residues. Gly residues-rich tracts occupy residues 46–65 (AGGG…GGDE) and 80–100 (GCGG…GGGS). The bHLH domain occupies 109–160 (TQRVMANVRERQRTQSLNEAFAALPKIIPTLPSDKLSKIQTLKLAARYIDFL). The tract at residues 162–190 (QVLQSDELDSKMASYVAHERLSYAFSVWR) is sufficient for transactivation activity.

In terms of assembly, efficient DNA binding requires dimerization with another bHLH protein. Homodimer or heterodimer with E proteins such as TCF3. ID1 binds preferentially to TCF3 but does not interact efficiently with TWIST1 so ID1 levels control the amount of TCF3 available to dimerize with TWIST and thus determine the type of dimer formed.

Its subcellular location is the nucleus. Its function is as follows. Acts as a transcriptional regulator. Inhibits myogenesis by sequestrating E proteins, inhibiting trans-activation by MEF2, and inhibiting DNA-binding by MYOD1 through physical interaction. This interaction probably involves the basic domains of both proteins. Also represses expression of pro-inflammatory cytokines such as TNFA and IL1B. Regulates cranial suture patterning and fusion. Activates transcription as a heterodimer with E proteins. Regulates gene expression differentially, depending on dimer composition. Homodimers induce expression of FGFR2 and POSTN while heterodimers repress FGFR2 and POSTN expression and induce THBS1 expression. Heterodimerization is also required for osteoblast differentiation. Represses the activity of the circadian transcriptional activator: NPAS2-BMAL1 heterodimer. In Pan troglodytes (Chimpanzee), this protein is Twist-related protein 1 (TWIST1).